A 143-amino-acid chain; its full sequence is Transcriptional regulator MraZ (143 aa).

SpoVT-AbrB domains are found at residues 5–47 (THTP…PRAE) and 76–119 (TDEQ…DAQA).

It belongs to the MraZ family. In terms of assembly, forms oligomers.

It localises to the cytoplasm. Its subcellular location is the nucleoid. The polypeptide is Transcriptional regulator MraZ (Mycobacterium leprae (strain Br4923)).